An 87-amino-acid chain; its full sequence is Neurotoxin LmNaTx64.1 (87 aa).

Residues 1–18 form the signal peptide; the sequence is MKILFLIILTAFFIGVHC. Residues 19–85 enclose the LCN-type CS-alpha/beta domain; the sequence is KHGYPIIRAG…TWSRATNKCK (67 aa). 4 disulfides stabilise this stretch: Cys-33–Cys-84, Cys-37–Cys-58, Cys-44–Cys-65, and Cys-48–Cys-67. Residue Cys-84 is modified to Cysteine amide.

This sequence belongs to the long (4 C-C) scorpion toxin superfamily. Sodium channel inhibitor family. Beta subfamily. As to expression, expressed by the venom gland.

Its subcellular location is the secreted. In terms of biological role, binds voltage-independently at site-4 of sodium channels (Nav) and shift the voltage of activation toward more negative potentials thereby affecting sodium channel activation and promoting spontaneous and repetitive firing. This chain is Neurotoxin LmNaTx64.1, found in Lychas mucronatus (Chinese swimming scorpion).